Consider the following 347-residue polypeptide: Neutral protease 2 homolog MGG_10927 (347 aa).

Residues 1–19 form the signal peptide; that stretch reads MKYSVGITALLATLAQGAA. A propeptide spanning residues 20 to 176 is cleaved from the precursor; sequence VMSKRDIPLD…RSYLAKRTMV (157 aa). 2 disulfide bridges follow: Cys-180–Cys-250 and Cys-257–Cys-275. Residue His-299 coordinates Zn(2+). Glu-300 is an active-site residue. Residue His-303 participates in Zn(2+) binding.

It belongs to the peptidase M35 family. The cofactor is Zn(2+).

Its subcellular location is the secreted. The catalysed reaction is Preferential cleavage of bonds with hydrophobic residues in P1'. Also 3-Asn-|-Gln-4 and 8-Gly-|-Ser-9 bonds in insulin B chain.. Its function is as follows. Secreted metalloproteinase that allows assimilation of proteinaceous substrates. Shows high activities on basic nuclear substrates such as histone and protamine. This Pyricularia oryzae (strain 70-15 / ATCC MYA-4617 / FGSC 8958) (Rice blast fungus) protein is Neutral protease 2 homolog MGG_10927.